The sequence spans 115 residues: uncharacterized protein (115 aa).

The CHCH domain maps to 63 to 108 (GSPCGFEFREAITCQKTNSDGEIEQGACGKELMSFMECVTRTQCFG). 2 short sequence motifs (cx9C motif) span residues 66–76 (CGFEFREAITC) and 90–100 (CGKELMSFMEC). 2 disulfides stabilise this stretch: Cys66-Cys100 and Cys76-Cys90.

This is an uncharacterized protein from Caenorhabditis elegans.